The following is a 298-amino-acid chain: ATP synthase gamma chain (298 aa).

It belongs to the ATPase gamma chain family. In terms of assembly, F-type ATPases have 2 components, CF(1) - the catalytic core - and CF(0) - the membrane proton channel. CF(1) has five subunits: alpha(3), beta(3), gamma(1), delta(1), epsilon(1). CF(0) has three main subunits: a, b and c.

Its subcellular location is the cell inner membrane. Functionally, produces ATP from ADP in the presence of a proton gradient across the membrane. The gamma chain is believed to be important in regulating ATPase activity and the flow of protons through the CF(0) complex. This is ATP synthase gamma chain from Desulforapulum autotrophicum (strain ATCC 43914 / DSM 3382 / VKM B-1955 / HRM2) (Desulfobacterium autotrophicum).